Here is a 519-residue protein sequence, read N- to C-terminus: Ribonuclease Y (519 aa).

A helical transmembrane segment spans residues Leu3–Val23. Positions Thr209 to Leu269 constitute a KH domain. One can recognise an HD domain in the interval Val335–Ala428.

It belongs to the RNase Y family.

It is found in the cell membrane. In terms of biological role, endoribonuclease that initiates mRNA decay. The protein is Ribonuclease Y of Staphylococcus epidermidis (strain ATCC 35984 / DSM 28319 / BCRC 17069 / CCUG 31568 / BM 3577 / RP62A).